The chain runs to 542 residues: Mitogen-activated protein kinase 14 (542 aa).

The region spanning 13–304 (YKIEEVIGKG…AEEALADPYF (292 aa)) is the Protein kinase domain. ATP is bound by residues 19 to 27 (IGKGSYGVV) and lysine 42. Aspartate 139 acts as the Proton acceptor in catalysis. Threonine 175 carries the post-translational modification Phosphothreonine. The short motif at 175–177 (TDY) is the TXY element. Phosphotyrosine is present on tyrosine 177. Disordered regions lie at residues 388 to 412 (STAAPPERQHNSLPRPCVVYSDNRP) and 482 to 542 (RNPA…SGHW). Residues 488–507 (PNSSVPLGSSYPRRNQTCKS) are compositionally biased toward polar residues.

Belongs to the protein kinase superfamily. CMGC Ser/Thr protein kinase family. MAP kinase subfamily. In terms of processing, dually phosphorylated on Thr-175 and Tyr-177, which activates the enzyme.

The enzyme catalyses L-seryl-[protein] + ATP = O-phospho-L-seryl-[protein] + ADP + H(+). The catalysed reaction is L-threonyl-[protein] + ATP = O-phospho-L-threonyl-[protein] + ADP + H(+). Activated by threonine and tyrosine phosphorylation. In Oryza sativa subsp. japonica (Rice), this protein is Mitogen-activated protein kinase 14 (MPK14).